Consider the following 1115-residue polypeptide: G-protein coupled receptor GRL101 (1115 aa).

The signal sequence occupies residues 1 to 24 (MATMSGTTIVCLIYLTTMLGNSQG). The Extracellular segment spans residues 25–767 (VNLKIESPSP…SCEDLMSNHV (743 aa)). LDL-receptor class A domains follow at residues 36 to 79 (TLCS…TCGC), 77 to 115 (CGCL…ECDI), 116 to 155 (YICP…ICER), 156 to 196 (RECV…ACDS), 195 to 232 (DSDK…NCKL), 231 to 269 (KLCD…VCAN), 272 to 318 (YGCP…YCSN), 320 to 363 (SECK…SCLA), 365 to 403 (PKCS…NCEN), 404 to 442 (HQCA…DCDP), 444 to 485 (PVCE…NCSQ), and 486 to 525 (HICL…NCRY). 16 disulfides stabilise this stretch: C38-C53, C46-C66, C60-C77, C79-C91, C86-C104, C98-C113, C118-C131, C138-C153, C158-C170, C165-C183, C177-C194, C202-C220, C214-C230, C233-C245, C240-C258, and C252-C267. N87 carries an N-linked (GlcNAc...) asparagine glycan. N-linked (GlcNAc...) asparagine glycosylation is present at N166. Residue N269 is glycosylated (N-linked (GlcNAc...) asparagine). 3 disulfide bridges follow: C274/C291, C282/C304, and C298/C316. A glycan (N-linked (GlcNAc...) asparagine) is linked at N318. 15 disulfide bridges follow: C322–C339, C334–C352, C346–C361, C367–C379, C374–C392, C386–C401, C406–C418, C413–C431, C425–C440, C446–C458, C453–C474, C465–C483, C488–C500, C495–C513, and C507–C523. The N-linked (GlcNAc...) asparagine glycan is linked to N482. N-linked (GlcNAc...) asparagine glycosylation is present at N502. The LRRNT domain occupies 518–562 (WDENNCRYWCPHGQAICQCEGVTMDCTGQKLKEMPVQQMEEDLSK). N571 is a glycosylation site (N-linked (GlcNAc...) asparagine). LRR repeat units follow at residues 584-605 (KVTY…SFQN), 608-629 (KLTH…SLLG), 632-653 (NLKQ…TFSS), 656-677 (HLTV…MFKG), 680-701 (QITV…AFNN), and 704-725 (NVRL…VFMG). N-linked (GlcNAc...) asparagine glycosylation is found at N618 and N624. N-linked (GlcNAc...) asparagine glycosylation occurs at N685. Residues 768 to 788 (LRVSIWVLGVIALVGNFVVIF) form a helical membrane-spanning segment. The Cytoplasmic portion of the chain corresponds to 789-801 (WRVRDFRGGKVHS). A helical transmembrane segment spans residues 802–822 (FLITNLAIGDFLMGVYLLIIA). At 823 to 857 (TADTYYRGVYISHDENWKQSGLCQFAGFVSTFSSE) the chain is on the extracellular side. The helical transmembrane segment at 858–878 (LSVLTLSTITLDRLICILFPL) threads the bilayer. The Cytoplasmic segment spans residues 879-887 (RRTRLGLRQ). Residues 888-908 (AIIVMSCIWVLVFLLAVLPLL) form a helical membrane-spanning segment. At 909-941 (GFSYFENFYGRSGVCLALHVTPDRRPGWEYSVG) the chain is on the extracellular side. Residues 942–962 (VFILLNLLSFVLIASSYLWMF) traverse the membrane as a helical segment. The Cytoplasmic segment spans residues 963-988 (SVAKKTRSAVRTAESKNDNAMARRMT). Residues 989–1009 (LIVMTDFCCWVPIIVLGFVSL) traverse the membrane as a helical segment. Over 1010 to 1017 (AGARADDQ) the chain is Extracellular. The helical transmembrane segment at 1018-1038 (VYAWIAVFVLPLNSATNPVIY) threads the bilayer. Residues 1039–1115 (TLSTAPFLGN…YYNTELHSDS (77 aa)) lie on the Cytoplasmic side of the membrane.

The protein belongs to the G-protein coupled receptor 1 family. Predominantly expressed in a small number of neurons within the central nervous system and to a lesser extent in the heart.

It is found in the cell membrane. In terms of biological role, might directly transduce signals carried by large extracellular lipoprotein complexes into neuronal events. This is G-protein coupled receptor GRL101 from Lymnaea stagnalis (Great pond snail).